Reading from the N-terminus, the 130-residue chain is Mediator of RNA polymerase II transcription subunit 31 (130 aa).

The protein belongs to the Mediator complex subunit 31 family. As to quaternary structure, component of the Mediator complex.

It localises to the nucleus. Component of the Mediator complex, a coactivator involved in the regulated transcription of nearly all RNA polymerase II-dependent genes. Mediator functions as a bridge to convey information from gene-specific regulatory proteins to the basal RNA polymerase II transcription machinery. Mediator is recruited to promoters by direct interactions with regulatory proteins and serves as a scaffold for the assembly of a functional preinitiation complex with RNA polymerase II and the general transcription factors. The chain is Mediator of RNA polymerase II transcription subunit 31 (SOH1) from Candida glabrata (strain ATCC 2001 / BCRC 20586 / JCM 3761 / NBRC 0622 / NRRL Y-65 / CBS 138) (Yeast).